Here is a 281-residue protein sequence, read N- to C-terminus: Bidirectional sugar transporter SWEET14 (281 aa).

Over 1-6 (MVLTHN) the chain is Extracellular. A helical transmembrane segment spans residues 7-27 (VLAVTFGVLGNIISFIVFLAP). The region spanning 11 to 97 (TFGVLGNIIS…ILFITYANKK (87 aa)) is the MtN3/slv 1 domain. Residues 28-42 (VPTFVRICKKKSIEG) lie on the Cytoplasmic side of the membrane. The helical transmembrane segment at 43–63 (FESLPYVSALFSAMLWIYYAL) threads the bilayer. The Extracellular portion of the chain corresponds to 64–70 (QKDGAGF). A helical transmembrane segment spans residues 71–91 (LLITINAVGCFIETIYIILFI). Over 92–104 (TYANKKARISTLK) the chain is Cytoplasmic. A helical membrane pass occupies residues 105 to 125 (VLGLLNFLGFAAIILVCELLT). Residues 126–132 (KGSNREK) lie on the Extracellular side of the membrane. Residues 133 to 153 (VLGGICVGFSVCVFAAPLSIM) traverse the membrane as a helical segment. The MtN3/slv 2 domain maps to 133-216 (VLGGICVGFS…MILYVIFKYY (84 aa)). At 154–166 (RVVIRTKSVEFMP) the chain is on the cytoplasmic side. Residues 167 to 187 (FSLSLFLTISAITWLFYGLAI) form a helical membrane-spanning segment. Topologically, residues 188 to 192 (KDFYV) are extracellular. Residues 193 to 213 (ALPNILGAFLGAVQMILYVIF) traverse the membrane as a helical segment. Residues 214–281 (KYYKTPLVVD…EDQMDKKMPN (68 aa)) lie on the Cytoplasmic side of the membrane. Polar residues predominate over residues 244 to 259 (TPASGDLTVQPQTNPD). Positions 244-281 (TPASGDLTVQPQTNPDVSHPIKTHGGDLEDQMDKKMPN) are disordered. The span at 267 to 281 (HGGDLEDQMDKKMPN) shows a compositional bias: basic and acidic residues.

Belongs to the SWEET sugar transporter family. As to quaternary structure, forms homooligomers and/or heterooligomers.

Its subcellular location is the cell membrane. Functionally, mediates both low-affinity uptake and efflux of sugar across the plasma membrane. The chain is Bidirectional sugar transporter SWEET14 from Arabidopsis thaliana (Mouse-ear cress).